The following is a 475-amino-acid chain: Trigger factor (475 aa).

In terms of domain architecture, PPIase FKBP-type spans 165–250 (GDRVTIDYLG…VKAVFRPDEL (86 aa)). A compositionally biased stretch (basic and acidic residues) spans 439–466 (EYDETDVPEEKPAKKKSAVKEKSAEKTS). Residues 439–475 (EYDETDVPEEKPAKKKSAVKEKSAEKTSAKKKAPKKA) form a disordered region.

This sequence belongs to the FKBP-type PPIase family. Tig subfamily.

It localises to the cytoplasm. It catalyses the reaction [protein]-peptidylproline (omega=180) = [protein]-peptidylproline (omega=0). Involved in protein export. Acts as a chaperone by maintaining the newly synthesized protein in an open conformation. Functions as a peptidyl-prolyl cis-trans isomerase. The polypeptide is Trigger factor (Bartonella tribocorum (strain CIP 105476 / IBS 506)).